Reading from the N-terminus, the 363-residue chain is Endopolygalacturonase A (363 aa).

The first 20 residues, 1 to 20, serve as a signal peptide directing secretion; the sequence is MQLLQSSVIAATVGAALVAA. A propeptide spanning residues 21-28 is cleaved from the precursor; it reads VPVELEAR. Cys-31 and Cys-46 are disulfide-bonded. PbH1 repeat units lie at residues 158–187, 188–209, 210–230, 239–260, 268–290, and 302–347; these read SDNL…DVGS, STYI…AINS, GSHI…SIGS, VEDV…RIKT, VSNV…IVEQ, and TNGI…SITG. An N-linked (GlcNAc...) asparagine glycan is attached at Asn-162. The active-site Proton donor is the Asp-202. A disulfide bond links Cys-204 and Cys-220. His-224 is an active-site residue. 2 cysteine pairs are disulfide-bonded: Cys-330/Cys-335 and Cys-354/Cys-363.

This sequence belongs to the glycosyl hydrolase 28 family.

It localises to the secreted. It carries out the reaction (1,4-alpha-D-galacturonosyl)n+m + H2O = (1,4-alpha-D-galacturonosyl)n + (1,4-alpha-D-galacturonosyl)m.. In terms of biological role, involved in maceration and soft-rotting of plant tissue. Hydrolyzes the 1,4-alpha glycosidic bonds of de-esterified pectate in the smooth region of the plant cell wall. This Aspergillus flavus (strain ATCC MYA-384 / AF70) protein is Endopolygalacturonase A (pgaA).